A 178-amino-acid polypeptide reads, in one-letter code: Ribosome maturation factor RimP (178 aa).

This sequence belongs to the RimP family.

It is found in the cytoplasm. Functionally, required for maturation of 30S ribosomal subunits. The chain is Ribosome maturation factor RimP from Mycolicibacterium gilvum (strain PYR-GCK) (Mycobacterium gilvum (strain PYR-GCK)).